The sequence spans 300 residues: UDP-3-O-acyl-N-acetylglucosamine deacetylase (300 aa).

Zn(2+) contacts are provided by His78, His237, and Asp241. His264 functions as the Proton donor in the catalytic mechanism.

The protein belongs to the LpxC family. Zn(2+) serves as cofactor.

It catalyses the reaction a UDP-3-O-[(3R)-3-hydroxyacyl]-N-acetyl-alpha-D-glucosamine + H2O = a UDP-3-O-[(3R)-3-hydroxyacyl]-alpha-D-glucosamine + acetate. Its pathway is glycolipid biosynthesis; lipid IV(A) biosynthesis; lipid IV(A) from (3R)-3-hydroxytetradecanoyl-[acyl-carrier-protein] and UDP-N-acetyl-alpha-D-glucosamine: step 2/6. Catalyzes the hydrolysis of UDP-3-O-myristoyl-N-acetylglucosamine to form UDP-3-O-myristoylglucosamine and acetate, the committed step in lipid A biosynthesis. The protein is UDP-3-O-acyl-N-acetylglucosamine deacetylase of Acinetobacter baumannii (strain AB307-0294).